The sequence spans 267 residues: 4-hydroxy-tetrahydrodipicolinate reductase (267 aa).

NAD(+) contacts are provided by residues 10–15 and glutamate 36; that span reads GCGGRM. Arginine 37 contacts NADP(+). NAD(+) is bound by residues 99 to 101 and 123 to 126; these read GTT and APNF. Histidine 156 serves as the catalytic Proton donor/acceptor. Histidine 157 serves as a coordination point for (S)-2,3,4,5-tetrahydrodipicolinate. Lysine 160 functions as the Proton donor in the catalytic mechanism. 166 to 167 is a (S)-2,3,4,5-tetrahydrodipicolinate binding site; it reads GT.

It belongs to the DapB family.

The protein resides in the cytoplasm. The catalysed reaction is (S)-2,3,4,5-tetrahydrodipicolinate + NAD(+) + H2O = (2S,4S)-4-hydroxy-2,3,4,5-tetrahydrodipicolinate + NADH + H(+). It carries out the reaction (S)-2,3,4,5-tetrahydrodipicolinate + NADP(+) + H2O = (2S,4S)-4-hydroxy-2,3,4,5-tetrahydrodipicolinate + NADPH + H(+). It participates in amino-acid biosynthesis; L-lysine biosynthesis via DAP pathway; (S)-tetrahydrodipicolinate from L-aspartate: step 4/4. Functionally, catalyzes the conversion of 4-hydroxy-tetrahydrodipicolinate (HTPA) to tetrahydrodipicolinate. The chain is 4-hydroxy-tetrahydrodipicolinate reductase from Laribacter hongkongensis (strain HLHK9).